A 605-amino-acid chain; its full sequence is Elongation factor 4 (605 aa).

The region spanning 9–192 (HHIRNFCIIA…AIVKRVPAPS (184 aa)) is the tr-type G domain. GTP is bound by residues 21–26 (DHGKST) and 139–142 (NKID).

The protein belongs to the TRAFAC class translation factor GTPase superfamily. Classic translation factor GTPase family. LepA subfamily.

The protein resides in the cell inner membrane. It catalyses the reaction GTP + H2O = GDP + phosphate + H(+). Functionally, required for accurate and efficient protein synthesis under certain stress conditions. May act as a fidelity factor of the translation reaction, by catalyzing a one-codon backward translocation of tRNAs on improperly translocated ribosomes. Back-translocation proceeds from a post-translocation (POST) complex to a pre-translocation (PRE) complex, thus giving elongation factor G a second chance to translocate the tRNAs correctly. Binds to ribosomes in a GTP-dependent manner. This Chlorobium phaeobacteroides (strain DSM 266 / SMG 266 / 2430) protein is Elongation factor 4.